Consider the following 328-residue polypeptide: Alanine racemase (328 aa).

Lys-33 functions as the Proton acceptor; specific for D-alanine in the catalytic mechanism. Lys-33 is subject to N6-(pyridoxal phosphate)lysine. Residue Arg-118 participates in substrate binding. Tyr-237 functions as the Proton acceptor; specific for L-alanine in the catalytic mechanism. Residue Met-283 coordinates substrate.

It belongs to the alanine racemase family. The cofactor is pyridoxal 5'-phosphate.

The catalysed reaction is L-alanine = D-alanine. It participates in amino-acid biosynthesis; D-alanine biosynthesis; D-alanine from L-alanine: step 1/1. Its function is as follows. Catalyzes the interconversion of L-alanine and D-alanine. May also act on other amino acids. In Campylobacter jejuni subsp. jejuni serotype O:23/36 (strain 81-176), this protein is Alanine racemase (alr).